The primary structure comprises 635 residues: Biosynthetic arginine decarboxylase (635 aa).

Position 100 is an N6-(pyridoxal phosphate)lysine (K100). V282–Y292 contacts substrate.

This sequence belongs to the Orn/Lys/Arg decarboxylase class-II family. SpeA subfamily. Requires Mg(2+) as cofactor. Pyridoxal 5'-phosphate is required as a cofactor.

The enzyme catalyses L-arginine + H(+) = agmatine + CO2. The protein operates within amine and polyamine biosynthesis; agmatine biosynthesis; agmatine from L-arginine: step 1/1. Functionally, catalyzes the biosynthesis of agmatine from arginine. The protein is Biosynthetic arginine decarboxylase of Geotalea daltonii (strain DSM 22248 / JCM 15807 / FRC-32) (Geobacter daltonii).